The following is a 706-amino-acid chain: Termination factor NPH-I homolog (706 aa).

In terms of domain architecture, Helicase ATP-binding spans 62 to 227; sequence IGQGENTRGL…VPCFNMLSGR (166 aa). ATP is bound at residue 75–82; sequence HQMGMGKT. A DEAH box motif is present at residues 168-171; the sequence is DEAH. One can recognise a Helicase C-terminal domain in the interval 417–599; the sequence is QCLQPLKVLE…HLNSAFRDLL (183 aa).

The protein belongs to the DEAD box helicase family. DEAH subfamily. As to quaternary structure, part of the viral DNA-directed RNA polymerase that consists of 8 polII-like subunits (RPB1, RPB2, RPB3, RPB5, RPB6, RPB7, RPB9, RPB10), a capping enzyme and a termination factor.

The protein localises to the virion. Functionally, putative DNA-dependent ATPase required for providing the needed energy to achieve the termination of early transcripts. The sequence is that of Termination factor NPH-I homolog from Ornithodoros (relapsing fever ticks).